The following is a 279-amino-acid chain: NH(3)-dependent NAD(+) synthetase (279 aa).

ATP is bound at residue 40–47 (GLSGGIDS). Asp46 lines the Mg(2+) pocket. Arg122 is a binding site for deamido-NAD(+). Thr142 provides a ligand contact to ATP. A Mg(2+)-binding site is contributed by Glu147. 2 residues coordinate deamido-NAD(+): Lys155 and Asp162. ATP-binding residues include Lys171 and Ser193. 253–254 (HK) provides a ligand contact to deamido-NAD(+).

Belongs to the NAD synthetase family. As to quaternary structure, homodimer.

It catalyses the reaction deamido-NAD(+) + NH4(+) + ATP = AMP + diphosphate + NAD(+) + H(+). The protein operates within cofactor biosynthesis; NAD(+) biosynthesis; NAD(+) from deamido-NAD(+) (ammonia route): step 1/1. Its function is as follows. Catalyzes the ATP-dependent amidation of deamido-NAD to form NAD. Uses ammonia as a nitrogen source. The polypeptide is NH(3)-dependent NAD(+) synthetase (Sulfurisphaera tokodaii (strain DSM 16993 / JCM 10545 / NBRC 100140 / 7) (Sulfolobus tokodaii)).